The following is a 211-amino-acid chain: Probable nicotinate-nucleotide adenylyltransferase (211 aa).

Belongs to the NadD family.

It catalyses the reaction nicotinate beta-D-ribonucleotide + ATP + H(+) = deamido-NAD(+) + diphosphate. Its pathway is cofactor biosynthesis; NAD(+) biosynthesis; deamido-NAD(+) from nicotinate D-ribonucleotide: step 1/1. Its function is as follows. Catalyzes the reversible adenylation of nicotinate mononucleotide (NaMN) to nicotinic acid adenine dinucleotide (NaAD). In Lactiplantibacillus plantarum (strain ATCC BAA-793 / NCIMB 8826 / WCFS1) (Lactobacillus plantarum), this protein is Probable nicotinate-nucleotide adenylyltransferase.